A 200-amino-acid chain; its full sequence is Peptidyl-tRNA hydrolase (200 aa).

Phe-16 contributes to the tRNA binding site. His-21 functions as the Proton acceptor in the catalytic mechanism. Residues Phe-67, Asn-69, and Asn-115 each contribute to the tRNA site.

This sequence belongs to the PTH family. Monomer.

It localises to the cytoplasm. It catalyses the reaction an N-acyl-L-alpha-aminoacyl-tRNA + H2O = an N-acyl-L-amino acid + a tRNA + H(+). Hydrolyzes ribosome-free peptidyl-tRNAs (with 1 or more amino acids incorporated), which drop off the ribosome during protein synthesis, or as a result of ribosome stalling. In terms of biological role, catalyzes the release of premature peptidyl moieties from peptidyl-tRNA molecules trapped in stalled 50S ribosomal subunits, and thus maintains levels of free tRNAs and 50S ribosomes. The protein is Peptidyl-tRNA hydrolase of Prochlorococcus marinus (strain MIT 9215).